We begin with the raw amino-acid sequence, 832 residues long: Cadherin-17 (832 aa).

A signal peptide spans 1-22 (MILQAHLHSLCLLMLYLATGYG). Residues 23–787 (QEGKFSGPLK…HQTGIPTVGM (765 aa)) are Extracellular-facing. 7 Cadherin domains span residues 30–128 (PLKP…TFLQ), 129–244 (SKYE…APKP), 245–340 (VEMV…PPTC), 341–449 (PSPV…IPIF), 450–566 (EKSD…APQF), 567–667 (SQHV…PPRL), and 668–777 (AKDY…RPAG). Residues Asn149, Asn184, Asn250, Asn419, Asn456, Asn546, Asn587, and Asn722 are each glycosylated (N-linked (GlcNAc...) asparagine). Residues 788 to 808 (AVGILLTTLLVIGIILAVVFI) traverse the membrane as a helical segment. The Cytoplasmic segment spans residues 809 to 832 (RIKKDKGKDNVESAQASEVKPLRS).

As to expression, expressed in the gastrointestinal tract and pancreatic duct. Not detected in kidney, lung, liver, brain, adrenal gland and skin.

The protein localises to the cell membrane. Cadherins are calcium-dependent cell adhesion proteins. They preferentially interact with themselves in a homophilic manner in connecting cells; cadherins may thus contribute to the sorting of heterogeneous cell types. LI-cadherin may have a role in the morphological organization of liver and intestine. Involved in intestinal peptide transport. This chain is Cadherin-17 (CDH17), found in Homo sapiens (Human).